A 259-amino-acid chain; its full sequence is Phosphatidylserine decarboxylase proenzyme (259 aa).

Active-site charge relay system; for autoendoproteolytic cleavage activity residues include Asp86, His142, and Ser226. The active-site Schiff-base intermediate with substrate; via pyruvic acid; for decarboxylase activity is Ser226. Ser226 is modified (pyruvic acid (Ser); by autocatalysis).

The protein belongs to the phosphatidylserine decarboxylase family. PSD-B subfamily. Prokaryotic type I sub-subfamily. Heterodimer of a large membrane-associated beta subunit and a small pyruvoyl-containing alpha subunit. Pyruvate serves as cofactor. Is synthesized initially as an inactive proenzyme. Formation of the active enzyme involves a self-maturation process in which the active site pyruvoyl group is generated from an internal serine residue via an autocatalytic post-translational modification. Two non-identical subunits are generated from the proenzyme in this reaction, and the pyruvate is formed at the N-terminus of the alpha chain, which is derived from the carboxyl end of the proenzyme. The autoendoproteolytic cleavage occurs by a canonical serine protease mechanism, in which the side chain hydroxyl group of the serine supplies its oxygen atom to form the C-terminus of the beta chain, while the remainder of the serine residue undergoes an oxidative deamination to produce ammonia and the pyruvoyl prosthetic group on the alpha chain. During this reaction, the Ser that is part of the protease active site of the proenzyme becomes the pyruvoyl prosthetic group, which constitutes an essential element of the active site of the mature decarboxylase.

Its subcellular location is the cell membrane. The enzyme catalyses a 1,2-diacyl-sn-glycero-3-phospho-L-serine + H(+) = a 1,2-diacyl-sn-glycero-3-phosphoethanolamine + CO2. The protein operates within phospholipid metabolism; phosphatidylethanolamine biosynthesis; phosphatidylethanolamine from CDP-diacylglycerol: step 2/2. In terms of biological role, catalyzes the formation of phosphatidylethanolamine (PtdEtn) from phosphatidylserine (PtdSer). The polypeptide is Phosphatidylserine decarboxylase proenzyme (Geobacillus sp. (strain WCH70)).